A 680-amino-acid polypeptide reads, in one-letter code: MKDRSSTPPLHVHVDENTPVHVHIKKLPKPSATSSQKSHKRGMKGDTVNVRRSVRVKTKVPWMPPGKSSARPVGCKWENPPHCLEITPPSSEKLVSVMRLSDLSTEDDDSGHCKMNRYDKKIDSLMNAVGCLKSEVKMQKGERQMAKRFLEERKEELEEVAHELAETEHENTVLRHNIERMKEEKDFTILQKKHLQQEKECLMSKLVEAEMDGAAAAKQVMALKDTIGKLKTEKQMTCTDINTLTRQKELLLQKLSTFGETNRTLRDLLREQHCKEDSERLMEQQGALLKRLAEADSEKARLLLLLRDKDKEVEELLQEIQCEKAQAKTASELSKSMESMRGHLQAQLRSKEAENSRLCMQIKNLERSGNQHKAEVEAIMEQLKELKQKGDRDKESLKKAIRAQKERAEKSEEYAEQLHVQLADKDLYVAEALSTLESWRSRYNQVVKDKGDLELEIIVLNDRVTDLVNQQQTLEEKMREDRDSLVERLHRQTAEYSAFKLENERLKASFAPMEDKLNQAHLEVQQLKASVKNYEGMIDNYKSQVMKTRLEADEVAAQLERCDKENKILKDEMNKEIEAARRQFQSQLADLQQLPDILKITEAKLAECQDQLQGYERKNIDLTAIISDLRSRETGGDQCPEYRVPTGDCQEGGGNPPVPAAARGENTGMWDPGKAVGERH.

A disordered region spans residues 27–46 (LPKPSATSSQKSHKRGMKGD). Phosphoserine is present on residues Ser-68 and Ser-69. Thr-87 is subject to Phosphothreonine. Ser-90 carries the post-translational modification Phosphoserine; by TSSK4. A phosphoserine mark is found at Ser-101 and Ser-104. The residue at position 105 (Thr-105) is a Phosphothreonine. Ser-110 and Ser-124 each carry phosphoserine. A Glycyl lysine isopeptide (Lys-Gly) (interchain with G-Cter in SUMO2) cross-link involves residue Lys-133. Ser-134 bears the Phosphoserine mark. The stretch at 139–212 (QKGERQMAKR…MSKLVEAEMD (74 aa)) forms a coiled coil. Thr-226 is modified (phosphothreonine). Phosphoserine is present on Ser-256. Coiled-coil stretches lie at residues 275 to 418 (KEDS…AEQL) and 456 to 630 (EIIV…SDLR). The interval 387-410 (KQKGDRDKESLKKAIRAQKERAEK) is disordered. A Phosphoserine modification is found at Ser-627. Residues 632 to 680 (RETGGDQCPEYRVPTGDCQEGGGNPPVPAAARGENTGMWDPGKAVGERH) form a disordered region.

It belongs to the ODF2 family. In terms of assembly, self-associates. Associates with microtubules and forms a fibrillar structure partially linked to the microtubule network. Interacts via its C-terminus with PLK1. Interacts with ODF1. Interacts with MARK4; the interaction is required for localization of ODF2 to centrioles. Interacts with TSSK4. Interacts with AKNA. Interacts with QRICH2. Interacts with CFAP58. Interacts with BBOF1. Interacts with CCDC38. Interacts with CCDC42. In terms of processing, tyrosine phosphorylated. Phosphorylated on Ser-90 by TSSK4.

Its subcellular location is the cytoplasm. It is found in the cytoskeleton. The protein resides in the microtubule organizing center. It localises to the centrosome. The protein localises to the cell projection. Its subcellular location is the cilium. It is found in the centriole. The protein resides in the spindle pole. It localises to the flagellum. Its function is as follows. Seems to be a major component of sperm tail outer dense fibers (ODF). ODFs are filamentous structures located on the outside of the axoneme in the midpiece and principal piece of the mammalian sperm tail and may help to maintain the passive elastic structures and elastic recoil of the sperm tail. May have a modulating influence on sperm motility. Functions as a general scaffold protein that is specifically localized at the distal/subdistal appendages of mother centrioles. Component of the centrosome matrix required for the localization of PLK1 and NIN to the centrosomes. Required for the formation and/or maintenance of normal CETN1 assembly. The protein is Outer dense fiber protein 2 (ODF2) of Pongo abelii (Sumatran orangutan).